The primary structure comprises 409 residues: uncharacterized protein (409 aa).

The first 29 residues, 1 to 29 (MARSRCVHRVVHQAACIGVIGLSTSALTT), serve as a signal peptide directing secretion. C30 is lipidated: N-palmitoyl cysteine. C30 carries the S-diacylglycerol cysteine lipid modification.

It belongs to the TP013X lipoprotein family.

It localises to the cell membrane. This is an uncharacterized protein from Treponema pallidum (strain Nichols).